We begin with the raw amino-acid sequence, 185 residues long: MPLSLRLAPSPTSFRYSPITSTGAGGFSPVKQHCRIPNSGVATKIGFCSGGGGVLDSGRRIGSCVVRCSLETVNVTVGQVTEVDKDTFWPIVKAAGDKIVVLDMYTQWCGPCKVIAPKYKELSEKYQDMVFLKLDCNQDNKPLAKELGIRVVPTFKILKDNKVVKEVTGAKYEDLLAAIEAARSG.

The Thioredoxin domain occupies R59–S184. Catalysis depends on nucleophile residues C109 and C112. The cysteines at positions 109 and 112 are disulfide-linked. Residue C136 is modified to S-glutathionyl cysteine; transient.

It belongs to the thioredoxin family. Plant F-type subfamily. In terms of processing, glutathionylation at Cys-136 decreases its ability to be reduced by ferredoxin-thioredoxin reductase and reduces its efficiency in activating target chloroplastic enzymes.

The protein resides in the plastid. It is found in the chloroplast stroma. Probable thiol-disulfide oxidoreductase involved in the redox regulation of enzymes of both reductive pentose phosphate pathway (Calvin-Benson cycle) and oxidative pentose phosphate pathway. This is Thioredoxin F2, chloroplastic from Arabidopsis thaliana (Mouse-ear cress).